We begin with the raw amino-acid sequence, 443 residues long: MKVPRLIVAGTESGAGKTTITISIILKLLANQMKVKPYKIGPDYIDPQFHRLASGVPSENLDLWMMNDDQIRYLLIEGSREFDISVIEGVMGLFDGAGSDFTGSTYDLARRTGTPIVLVIDGYGISATAAAIVSGIKAYAGELLRGVIVTRVSGESHYRLIRDAVEEKTGVPVLGYMIRNEKAVLESRHLGLVQAYEIDEIREIFGAIDSSTVIDMHQIIDIARSADKLETLYSPEIERLGTFKVSVAMDSAFDFYYEENLRMLKRMGASIRYFSPMGNEVPDADSDLIYLGGGYPEVFAGKLQSATDTIEAIRHAASIGTGVYAECGGYMFLCRSLESTDGHIYGGVGIIPASVYMDASLVIGYREISAKRDTSILRAGETARGHEFHKSRIRFDGPYDHPFVLKSRSSSFEDGFSSGSVTATYAHIHFLSNPRVAENLLIA.

The region spanning 244–435 is the GATase cobBQ-type domain; that stretch reads KVSVAMDSAF…AHIHFLSNPR (192 aa). Catalysis depends on Cys-327, which acts as the Nucleophile.

The protein belongs to the CobB/CbiA family. The cofactor is Mg(2+).

It carries out the reaction cob(II)yrinate + 2 L-glutamine + 2 ATP + 2 H2O = cob(II)yrinate a,c diamide + 2 L-glutamate + 2 ADP + 2 phosphate + 2 H(+). Its pathway is cofactor biosynthesis; adenosylcobalamin biosynthesis; cob(II)yrinate a,c-diamide from sirohydrochlorin (anaerobic route): step 10/10. Its function is as follows. Catalyzes the ATP-dependent amidation of the two carboxylate groups at positions a and c of cobyrinate, using either L-glutamine or ammonia as the nitrogen source. This is Cobyrinate a,c-diamide synthase from Thermoplasma acidophilum (strain ATCC 25905 / DSM 1728 / JCM 9062 / NBRC 15155 / AMRC-C165).